The primary structure comprises 144 residues: Superoxide dismutase [Mn], mitochondrial (144 aa).

Histidine 10, histidine 58, and aspartate 143 together coordinate Mn(2+).

Belongs to the iron/manganese superoxide dismutase family. As to quaternary structure, homotetramer. Requires Mn(2+) as cofactor.

The protein localises to the mitochondrion matrix. The catalysed reaction is 2 superoxide + 2 H(+) = H2O2 + O2. Functionally, destroys superoxide anion radicals which are normally produced within the cells and which are toxic to biological systems. This is Superoxide dismutase [Mn], mitochondrial from Branchiostoma floridae (Florida lancelet).